Here is a 376-residue protein sequence, read N- to C-terminus: Erythronate-4-phosphate dehydrogenase (376 aa).

The substrate site is built by serine 45 and threonine 67. Aspartate 147 contacts NAD(+). The active site involves arginine 209. Aspartate 233 contacts NAD(+). Glutamate 238 is an active-site residue. Histidine 255 (proton donor) is an active-site residue. Glycine 258 provides a ligand contact to NAD(+). Tyrosine 259 serves as a coordination point for substrate.

The protein belongs to the D-isomer specific 2-hydroxyacid dehydrogenase family. PdxB subfamily. Homodimer.

The protein resides in the cytoplasm. The catalysed reaction is 4-phospho-D-erythronate + NAD(+) = (R)-3-hydroxy-2-oxo-4-phosphooxybutanoate + NADH + H(+). Its pathway is cofactor biosynthesis; pyridoxine 5'-phosphate biosynthesis; pyridoxine 5'-phosphate from D-erythrose 4-phosphate: step 2/5. In terms of biological role, catalyzes the oxidation of erythronate-4-phosphate to 3-hydroxy-2-oxo-4-phosphonooxybutanoate. The chain is Erythronate-4-phosphate dehydrogenase from Shewanella baltica (strain OS223).